Reading from the N-terminus, the 522-residue chain is Lysine--tRNA ligase (522 aa).

Positions 44 to 52 (PSGLPHIGT) match the 'HIGH' region motif. The 'KMSKS' region motif lies at 290–294 (KISKS). K293 lines the ATP pocket.

Belongs to the class-I aminoacyl-tRNA synthetase family.

It is found in the cytoplasm. The catalysed reaction is tRNA(Lys) + L-lysine + ATP = L-lysyl-tRNA(Lys) + AMP + diphosphate. The protein is Lysine--tRNA ligase of Rickettsia massiliae (strain Mtu5).